Consider the following 198-residue polypeptide: Large ribosomal subunit protein bL25 (198 aa).

This sequence belongs to the bacterial ribosomal protein bL25 family. CTC subfamily. Part of the 50S ribosomal subunit; part of the 5S rRNA/L5/L18/L25 subcomplex. Contacts the 5S rRNA. Binds to the 5S rRNA independently of L5 and L18.

Functionally, this is one of the proteins that binds to the 5S RNA in the ribosome where it forms part of the central protuberance. This is Large ribosomal subunit protein bL25 from Azotobacter vinelandii (strain DJ / ATCC BAA-1303).